The following is a 256-amino-acid chain: MLILVSPAKTLDFEQPPLTQVYSQPDFLTHSQELIQVCRQLAPSDIATLMKVSDKIAGLNAARFGEWQPDFSLDNAKQAIFAFRGDVYTGFDADSLSEDEIAQTQSQLRILSGLYGLLRPLDLIMPYRLEMGTALSNPKGKNLYEFWGDTLTQAVNEALAESGSDIIVNLASNEYFKAIKPKKLQGQLISPVFKDCKNGQYKVISFFAKRARGMMARYIITNKVNTLAELKAFNLAGYYYSEEQSSPTNPTFLRAE.

Belongs to the UPF0246 family.

The sequence is that of UPF0246 protein Sbal_1048 from Shewanella baltica (strain OS155 / ATCC BAA-1091).